Here is a 733-residue protein sequence, read N- to C-terminus: Catalase-peroxidase 2 (733 aa).

Residues 1 to 35 (MAEAETHPPIGESQTEPAESGCPMRIKPPVEGGSN) are disordered. Residues 106 to 234 (WHAAGTYRVE…PXXPHMGLIY (129 aa)) constitute a cross-link (tryptophyl-tyrosyl-methioninium (Trp-Tyr) (with M-260)). His-107 (proton acceptor) is an active-site residue. The segment at residues 234 to 260 (YVNPEGPEGNPDYLAAAIDIRETFGRM) is a cross-link (tryptophyl-tyrosyl-methioninium (Tyr-Met) (with W-106)). Residue His-275 coordinates heme.

This sequence belongs to the peroxidase family. Peroxidase/catalase subfamily. Homodimer or homotetramer. The cofactor is heme b. In terms of processing, formation of the three residue Trp-Tyr-Met cross-link is important for the catalase, but not the peroxidase activity of the enzyme.

The catalysed reaction is H2O2 + AH2 = A + 2 H2O. The enzyme catalyses 2 H2O2 = O2 + 2 H2O. Its function is as follows. Bifunctional enzyme with both catalase and broad-spectrum peroxidase activity. May play a role in the intracellular survival of mycobacteria. This is Catalase-peroxidase 2 from Mycolicibacterium fortuitum (Mycobacterium fortuitum).